We begin with the raw amino-acid sequence, 814 residues long: Kexin (814 aa).

The first 19 residues, 1-19, serve as a signal peptide directing secretion; it reads MKVRKYITLCFWWAFSTSA. A propeptide spanning residues 20–109 is cleaved from the precursor; it reads LVSSQQIPLK…LFPRNDLFKR (90 aa). The N-linked (GlcNAc...) asparagine glycan is linked to Asn-42. A propeptide spans 110–113 (removed by dipeptidylpeptidase STE13); sequence LPVP. Residues 114-678 lie on the Lumenal side of the membrane; that stretch reads APPMDSSLLP…KLSSPRQAMH (565 aa). Position 135 (Asp-135) interacts with Ca(2+). The Peptidase S8 domain occupies 141–453; it reads QWHLVNPSFP…FGKIDAHKLI (313 aa). An N-linked (GlcNAc...) asparagine glycan is attached at Asn-163. Asp-175 acts as the Charge relay system in catalysis. A Ca(2+)-binding site is contributed by Asp-184. His-213 (charge relay system) is an active-site residue. Positions 227, 277, 320, and 350 each coordinate Ca(2+). Intrachain disulfides connect Cys-230/Cys-377 and Cys-322/Cys-352. Ser-385 (charge relay system) is an active-site residue. N-linked (GlcNAc...) asparagine glycosylation is found at Asn-404 and Asn-480. In terms of domain architecture, P/Homo B spans 462-596; sequence VNAQTWFYLP…RLKLFGESID (135 aa). A disordered region spans residues 651–671; it reads PQTTTASTDPDSDPNTPKKLS. Positions 653–667 are enriched in low complexity; sequence TTTASTDPDSDPNTP. A helical transmembrane segment spans residues 679-699; the sequence is YFLTIFLIGATFLVLYFMFFM. Residues 700–814 are Cytoplasmic-facing; that stretch reads KSRRRIRRSR…PDVPPSSGRS (115 aa). The interval 756 to 814 is disordered; sequence SLSSSENGDAEHTIDSVLTNENPFSDPIKQKFPNDANAESASNKLQELQPDVPPSSGRS. Polar residues predominate over residues 792 to 801; sequence NAESASNKLQ.

This sequence belongs to the peptidase S8 family. Furin subfamily. The cofactor is Ca(2+). O-glycosylated.

Its subcellular location is the golgi apparatus. It is found in the trans-Golgi network membrane. The enzyme catalyses Cleavage of -Lys-Arg-|-Xaa- and -Arg-Arg-|-Xaa- bonds to process yeast alpha-factor pheromone and killer toxin precursors.. In terms of biological role, processing of precursors of alpha-factors and killer toxin. This Saccharomyces cerevisiae (strain ATCC 204508 / S288c) (Baker's yeast) protein is Kexin (KEX2).